The chain runs to 119 residues: Beta-2-microglobulin (119 aa).

A signal peptide spans 1–20; the sequence is MARFVVAALLVLLSLSGLEA. Residues 25 to 114 form the Ig-like C1-type domain; that stretch reads PKIQVYSRHP…MTFPAPKTVK (90 aa). Cysteines 45 and 100 form a disulfide.

This sequence belongs to the beta-2-microglobulin family. In terms of assembly, heterodimer of an alpha chain and a beta chain. Beta-2-microglobulin is the beta-chain of major histocompatibility complex class I molecules.

It localises to the secreted. In terms of biological role, component of the class I major histocompatibility complex (MHC). Involved in the presentation of peptide antigens to the immune system. The chain is Beta-2-microglobulin (B2M) from Pithecia irrorata (Gray monk saki).